We begin with the raw amino-acid sequence, 185 residues long: Large ribosomal subunit protein uL22 (185 aa).

Belongs to the universal ribosomal protein uL22 family. As to quaternary structure, part of the 50S ribosomal subunit.

Functionally, this protein binds specifically to 23S rRNA. It makes multiple contacts with different domains of the 23S rRNA in the assembled 50S subunit and ribosome. In terms of biological role, the globular domain of the protein is located near the polypeptide exit tunnel on the outside of the subunit, while an extended beta-hairpin is found that lines the wall of the exit tunnel in the center of the 70S ribosome. This is Large ribosomal subunit protein uL22 from Pyrobaculum neutrophilum (strain DSM 2338 / JCM 9278 / NBRC 100436 / V24Sta) (Thermoproteus neutrophilus).